Consider the following 364-residue polypeptide: Dihydroorotate dehydrogenase (quinone) (364 aa).

FMN-binding positions include 61–65 (AGYDK) and Thr-85. Position 65 (Lys-65) interacts with substrate. 110-114 (NRLGF) lines the substrate pocket. Residues Asn-139 and Asn-170 each coordinate FMN. Position 170 (Asn-170) interacts with substrate. Ser-173 acts as the Nucleophile in catalysis. Asn-175 contacts substrate. Residues Lys-215 and Ser-243 each contribute to the FMN site. Residue 244-245 (NT) participates in substrate binding. Residues Gly-266, Gly-295, and 316 to 317 (YS) contribute to the FMN site.

The protein belongs to the dihydroorotate dehydrogenase family. Type 2 subfamily. In terms of assembly, monomer. FMN is required as a cofactor.

It is found in the cell membrane. The catalysed reaction is (S)-dihydroorotate + a quinone = orotate + a quinol. Its pathway is pyrimidine metabolism; UMP biosynthesis via de novo pathway; orotate from (S)-dihydroorotate (quinone route): step 1/1. Functionally, catalyzes the conversion of dihydroorotate to orotate with quinone as electron acceptor. This Brucella melitensis biotype 2 (strain ATCC 23457) protein is Dihydroorotate dehydrogenase (quinone).